Here is an 887-residue protein sequence, read N- to C-terminus: Alanine--tRNA ligase (887 aa).

Zn(2+)-binding residues include H573, H577, C676, and H680.

The protein belongs to the class-II aminoacyl-tRNA synthetase family. Zn(2+) is required as a cofactor.

It localises to the cytoplasm. The enzyme catalyses tRNA(Ala) + L-alanine + ATP = L-alanyl-tRNA(Ala) + AMP + diphosphate. In terms of biological role, catalyzes the attachment of alanine to tRNA(Ala) in a two-step reaction: alanine is first activated by ATP to form Ala-AMP and then transferred to the acceptor end of tRNA(Ala). Also edits incorrectly charged Ser-tRNA(Ala) and Gly-tRNA(Ala) via its editing domain. The sequence is that of Alanine--tRNA ligase from Corynebacterium jeikeium (strain K411).